The sequence spans 331 residues: Tetraacyldisaccharide 4'-kinase (331 aa).

55 to 62 (TAGGNGKT) contacts ATP.

It belongs to the LpxK family.

The catalysed reaction is a lipid A disaccharide + ATP = a lipid IVA + ADP + H(+). The protein operates within glycolipid biosynthesis; lipid IV(A) biosynthesis; lipid IV(A) from (3R)-3-hydroxytetradecanoyl-[acyl-carrier-protein] and UDP-N-acetyl-alpha-D-glucosamine: step 6/6. Its function is as follows. Transfers the gamma-phosphate of ATP to the 4'-position of a tetraacyldisaccharide 1-phosphate intermediate (termed DS-1-P) to form tetraacyldisaccharide 1,4'-bis-phosphate (lipid IVA). This chain is Tetraacyldisaccharide 4'-kinase, found in Edwardsiella ictaluri (strain 93-146).